The following is a 249-amino-acid chain: 2,3-bisphosphoglycerate-dependent phosphoglycerate mutase (249 aa).

Substrate is bound by residues 11-18 (RHGESDWN), 24-25 (TG), arginine 63, 90-93 (ERHY), lysine 101, 117-118 (RR), and 184-185 (GN). Catalysis depends on histidine 12, which acts as the Tele-phosphohistidine intermediate. The active-site Proton donor/acceptor is glutamate 90.

The protein belongs to the phosphoglycerate mutase family. BPG-dependent PGAM subfamily.

It carries out the reaction (2R)-2-phosphoglycerate = (2R)-3-phosphoglycerate. It functions in the pathway carbohydrate degradation; glycolysis; pyruvate from D-glyceraldehyde 3-phosphate: step 3/5. In terms of biological role, catalyzes the interconversion of 2-phosphoglycerate and 3-phosphoglycerate. The chain is 2,3-bisphosphoglycerate-dependent phosphoglycerate mutase from Mycobacterium bovis (strain BCG / Pasteur 1173P2).